Consider the following 333-residue polypeptide: Gap junction alpha-4 protein (333 aa).

Over 1–20 the chain is Cytoplasmic; sequence MGDWGFLEKLLDQVQEHSTV. A helical membrane pass occupies residues 21–40; sequence VGKIWLTVLFIFRILILGLA. Residues 41–76 are Extracellular-facing; that stretch reads GESVWGDEQSDFECNTAQPGCTNVCYDQAFPISHIR. A helical transmembrane segment spans residues 77-99; sequence YWVLQFLFVSTPTLIYLGHVIYL. Residues 100–148 are Cytoplasmic-facing; it reads SRREERLRQKEGELRALPSKDPHVERALAAIEHQMAKISVAEDGRLRIR. A helical transmembrane segment spans residues 149-171; sequence GALMGTYVISVLCKSVLEAGFLY. Over 172 to 208 the chain is Extracellular; the sequence is GQWRLYGWTMEPVFVCQRAPCPHVVDCYVSRPTEKTI. The helical transmembrane segment at 209 to 231 threads the bilayer; sequence FIIFMLVVGVISLVLNLLELVHL. The Cytoplasmic segment spans residues 232 to 333; that stretch reads LCRCVSREIK…NSSASKKQYV (102 aa). The segment at 292-333 is disordered; the sequence is ANLTTEERLTSTRPPPFVNAAPQGGQKSSSRPNSSASKKQYV. Over residues 318–333 the composition is skewed to low complexity; it reads KSSSRPNSSASKKQYV.

The protein belongs to the connexin family. Alpha-type (group II) subfamily. As to quaternary structure, a connexon is composed of a hexamer of connexins. Highly expressed in lung.

The protein resides in the cell membrane. It is found in the cell junction. It localises to the gap junction. In terms of biological role, one gap junction consists of a cluster of closely packed pairs of transmembrane channels, the connexons, through which materials of low MW diffuse from one cell to a neighboring cell. This chain is Gap junction alpha-4 protein (Gja4), found in Rattus norvegicus (Rat).